The following is a 742-amino-acid chain: Collectin-12 (742 aa).

Topologically, residues 1-37 (MKDDFAEEEEVHSFGYKRFGIQEGTQCTKCKNNWALK) are cytoplasmic. The helical; Signal-anchor for type II membrane protein transmembrane segment at 38 to 58 (LSIILLYILCALLTITVAILG) threads the bilayer. At 59-742 (YKVVEKMDNV…DRERELAITL (684 aa)) the chain is on the extracellular side. A glycan (N-linked (GlcNAc...) asparagine) is linked at Asn67. Residues 73–141 (ETSRQTYDDK…NKDTLEKLQA (69 aa)) are a coiled coil. N-linked (GlcNAc...) asparagine glycans are attached at residues Asn159 and Asn168. Residues 215–254 (QQRNLITNLQRSVDDTSQAIQRIKNDFQNLQQVFLQAKKD) adopt a coiled-coil conformation. A glycan (N-linked (GlcNAc...) asparagine) is linked at Asn271. The stretch at 296–328 (QMDNITTASQANEQNLKDLQDVHRDAENRTAAK) forms a coiled coil. Positions 439–591 (TILQGPPGPR…PPGPSGAAVP (153 aa)) are disordered. Collagen-like domains are found at residues 443-502 (GPPG…KGSK) and 527-586 (GPPG…PGPS). Residues 501-514 (SKGLQGSKGSRGSP) are compositionally biased toward low complexity. Residues 516 to 532 (KPGPQGPSGDPGPPGPP) show a composition bias toward pro residues. Residues 534–556 (KDGLPGPQGPPGFQGLQGTVGEP) show a composition bias toward low complexity. Intrachain disulfides connect Cys607–Cys618, Cys635–Cys730, and Cys708–Cys722. In terms of domain architecture, C-type lectin spans 614–731 (FTDKCYYFST…CEDMNHFICE (118 aa)). Positions 644, 646, 650, 670, and 674 each coordinate Ca(2+). 3 residues coordinate a carbohydrate: Lys691, Gln694, and Asp696. Ca(2+) contacts are provided by Gln694, Asp696, Asn697, Glu706, Asp707, Asn718, Asp719, and Glu731. An a carbohydrate-binding site is contributed by Glu706. Residues Asn718 and Asp719 each contribute to the a carbohydrate site.

In terms of assembly, the extracellular domain forms a stable trimer. The extracellular domain interacts with fibrillar amyloid-beta peptide.

Its subcellular location is the membrane. Scavenger receptor that displays several functions associated with host defense. Promotes binding and phagocytosis of Gram-positive, Gram-negative bacteria and yeast. Mediates the recognition, internalization and degradation of oxidatively modified low density lipoprotein (oxLDL) by vascular endothelial cells. Binds to several carbohydrates including Gal-type ligands, D-galactose, L- and D-fucose, GalNAc, T and Tn antigens in a calcium-dependent manner and internalizes specifically GalNAc in nurse-like cells. Also binds to sialyl Lewis X or a trisaccharide and asialo-orosomucoid (ASOR). The sequence is that of Collectin-12 (COLEC12) from Bos taurus (Bovine).